The following is a 405-amino-acid chain: Enoyl-[acyl-carrier-protein] reductase [NADH] (405 aa).

NAD(+) is bound by residues 51–56, 77–78, 114–115, and 142–143; these read GASSGY, FE, DA, and LA. Y228 is a binding site for substrate. Residue Y238 is the Proton donor of the active site. NAD(+) is bound by residues K247 and 276-278; that span reads VVT.

This sequence belongs to the TER reductase family. Monomer.

It catalyses the reaction a 2,3-saturated acyl-[ACP] + NAD(+) = a (2E)-enoyl-[ACP] + NADH + H(+). It functions in the pathway lipid metabolism; fatty acid biosynthesis. Functionally, involved in the final reduction of the elongation cycle of fatty acid synthesis (FAS II). Catalyzes the reduction of a carbon-carbon double bond in an enoyl moiety that is covalently linked to an acyl carrier protein (ACP). The polypeptide is Enoyl-[acyl-carrier-protein] reductase [NADH] (Chromohalobacter salexigens (strain ATCC BAA-138 / DSM 3043 / CIP 106854 / NCIMB 13768 / 1H11)).